Reading from the N-terminus, the 574-residue chain is K(+)/H(+) antiporter NhaP2 (574 aa).

13 helical membrane passes run 6–26 (INSF…LSPM), 34–54 (ILLI…GGIL), 58–78 (YSTA…DGGM), 87–107 (VALW…TSIT), 109–129 (VMAA…GAIV), 173–193 (IAIL…ISFI), 196–216 (FGLG…LVNV), 219–239 (LAEG…YATS), 242–262 (LGGS…NKPT), 271–291 (VLDG…GLLL), 299–319 (IWLP…PLAV), 335–355 (WFIS…VFPM), and 359–379 (LPGA…SLLV). The region spanning 405 to 486 (SGVEIYPKSE…LEALSNLFSQ (82 aa)) is the RCK C-terminal domain.

This sequence belongs to the monovalent cation:proton antiporter 1 (CPA1) transporter (TC 2.A.36) family. NhaP2 subfamily.

The protein localises to the cell inner membrane. It carries out the reaction K(+)(in) + H(+)(out) = K(+)(out) + H(+)(in). K(+)/H(+) antiporter that extrudes potassium in exchange for external protons and maintains the internal concentration of potassium under toxic levels. In Shewanella oneidensis (strain ATCC 700550 / JCM 31522 / CIP 106686 / LMG 19005 / NCIMB 14063 / MR-1), this protein is K(+)/H(+) antiporter NhaP2.